Reading from the N-terminus, the 181-residue chain is Probable pyruvoyl-dependent arginine decarboxylase (181 aa).

Ser43 is modified (pyruvic acid (Ser)).

Belongs to the PdaD family. Pyruvate serves as cofactor.

It carries out the reaction L-arginine + H(+) = agmatine + CO2. This is Probable pyruvoyl-dependent arginine decarboxylase from Chlorobaculum parvum (strain DSM 263 / NCIMB 8327) (Chlorobium vibrioforme subsp. thiosulfatophilum).